Here is a 748-residue protein sequence, read N- to C-terminus: 5-methyltetrahydropteroyltriglutamate--homocysteine methyltransferase (748 aa).

5-methyltetrahydropteroyltri-L-glutamate-binding positions include 18–21 and lysine 112; that span reads REWK. Residues 420–422 and glutamate 473 contribute to the L-homocysteine site; that span reads IGS. Residues 420–422 and glutamate 473 each bind L-methionine; that span reads IGS. A 5-methyltetrahydropteroyltri-L-glutamate-binding site is contributed by tryptophan 550. Residue aspartate 588 participates in L-homocysteine binding. An L-methionine-binding site is contributed by aspartate 588. Glutamate 594 contacts 5-methyltetrahydropteroyltri-L-glutamate. 3 residues coordinate Zn(2+): histidine 630, cysteine 632, and glutamate 654. Catalysis depends on histidine 683, which acts as the Proton donor. Cysteine 715 contributes to the Zn(2+) binding site.

This sequence belongs to the vitamin-B12 independent methionine synthase family. Zn(2+) is required as a cofactor.

The enzyme catalyses 5-methyltetrahydropteroyltri-L-glutamate + L-homocysteine = tetrahydropteroyltri-L-glutamate + L-methionine. Its pathway is amino-acid biosynthesis; L-methionine biosynthesis via de novo pathway; L-methionine from L-homocysteine (MetE route): step 1/1. Functionally, catalyzes the transfer of a methyl group from 5-methyltetrahydrofolate to homocysteine resulting in methionine formation. This chain is 5-methyltetrahydropteroyltriglutamate--homocysteine methyltransferase, found in Staphylococcus epidermidis (strain ATCC 35984 / DSM 28319 / BCRC 17069 / CCUG 31568 / BM 3577 / RP62A).